We begin with the raw amino-acid sequence, 264 residues long: Neuferricin (264 aa).

The signal sequence occupies residues 1 to 22 (MLRCGGRGLLLGLAVAAAAVMA). Residues 35–134 (FRLFIPEELS…KNYVCVGRVT (100 aa)) enclose the Cytochrome b5 heme-binding domain.

The protein belongs to the cytochrome b5 family. MAPR subfamily.

The protein resides in the secreted. In terms of biological role, heme-binding protein which promotes neuronal but not astrocyte differentiation. The sequence is that of Neuferricin from Homo sapiens (Human).